The following is a 432-amino-acid chain: Adenylosuccinate synthetase (432 aa).

Residues 13–19 (GDEGKGK) and 41–43 (GHT) each bind GTP. Asp-14 functions as the Proton acceptor in the catalytic mechanism. Residues Asp-14 and Gly-41 each coordinate Mg(2+). IMP contacts are provided by residues 14 to 17 (DEGK), 39 to 42 (NAGH), Thr-130, Arg-144, Gln-225, Thr-240, and Arg-304. His-42 acts as the Proton donor in catalysis. 300–306 (ATTGRKR) contacts substrate. GTP is bound by residues Arg-306, 332-334 (KLD), and 415-417 (STG).

This sequence belongs to the adenylosuccinate synthetase family. As to quaternary structure, homodimer. Mg(2+) is required as a cofactor.

It localises to the cytoplasm. The catalysed reaction is IMP + L-aspartate + GTP = N(6)-(1,2-dicarboxyethyl)-AMP + GDP + phosphate + 2 H(+). It functions in the pathway purine metabolism; AMP biosynthesis via de novo pathway; AMP from IMP: step 1/2. Plays an important role in the de novo pathway of purine nucleotide biosynthesis. Catalyzes the first committed step in the biosynthesis of AMP from IMP. In Photobacterium profundum (strain SS9), this protein is Adenylosuccinate synthetase.